Here is a 280-residue protein sequence, read N- to C-terminus: Four and a half LIM domains protein 3 (280 aa).

N-acetylserine is present on Ser2. Residues 7–31 form a C4-type zinc finger; sequence CAKCSESLYGRKYIQTDDGPYCVPC. LIM zinc-binding domains are found at residues 40–92 and 101–153; these read CAEC…CNDC and CSAC…CVPC. Lys157 is subject to N6-acetyllysine. LIM zinc-binding domains follow at residues 162 to 212 and 221 to 275; these read CARC…CVTC and CSSC…CQGC. Residue Lys235 is modified to N6-acetyllysine.

In terms of assembly, interacts with SOX15; the interaction recruits FHL3 to FOXK1 promoters where it acts as a transcriptional coactivator of FOXK1.

The protein localises to the nucleus. The protein resides in the cytoplasm. Its function is as follows. Recruited by SOX15 to FOXK1 promoters where it acts as a transcriptional coactivator of FOXK1. The protein is Four and a half LIM domains protein 3 (FHL3) of Bos taurus (Bovine).